We begin with the raw amino-acid sequence, 279 residues long: DegV domain-containing protein lin1977 (279 aa).

Positions 4–278 constitute a DegV domain; sequence IKIITDSTAG…TGAFAFMYYT (275 aa). Positions 62 and 94 each coordinate hexadecanoate.

May bind long-chain fatty acids, such as palmitate, and may play a role in lipid transport or fatty acid metabolism. The chain is DegV domain-containing protein lin1977 from Listeria innocua serovar 6a (strain ATCC BAA-680 / CLIP 11262).